The following is a 547-amino-acid chain: Intercellular adhesion molecule 3 (547 aa).

Positions 1–29 (MATMVPSVLWPRACWTLLVCCLLTPGVQG) are cleaved as a signal peptide. Residues 30-485 (QEFLLRVEPQ…VMDIEAGSSH (456 aa)) are Extracellular-facing. The 58-residue stretch at 46 to 103 (GGSLFVNCSTDCPSSEKIALETSLSKELVASGMGWAAFNLSNVTGNSRILCSVYCNGS) folds into the Ig-like C2-type 1 domain. Residues N52, N84, N87, N101, N110, and N134 are each glycosylated (N-linked (GlcNAc...) asparagine). Intrachain disulfides connect C53–C96 and C57–C100. Residues 132–197 (GQNFTLRCQV…FSCRTELDMQ (66 aa)) form the Ig-like C2-type 2 domain. Residues C139 and C190 are joined by a disulfide bond. N-linked (GlcNAc...) asparagine glycosylation is found at N206, N264, N295, N308, N320, N363, N389, N453, and N457. Positions 234–301 (ETSWPVDCTL…IVCNVTLGGE (68 aa)) constitute an Ig-like C2-type 3 domain. An intrachain disulfide couples C241 to C294. Residues 329-382 (GSTVTVSCMAGARVQVTLDGVPAAAPGQPAQLQLNATESDDRRSFFCSATLEVD) enclose the Ig-like C2-type 4 domain. An intrachain disulfide couples C336 to C375. Residues 416–469 (KTTHVLQCQARGNPYPELRCLKEGSSREVPVGIPFFVNVTHNGTYQCQASSSRG) enclose the Ig-like C2-type 5 domain. Cysteines 423 and 462 form a disulfide. The chain crosses the membrane as a helical span at residues 486-510 (FVPVFVAVLLTLGVVTIVLALMYVF). The Cytoplasmic segment spans residues 511–547 (REHKRSGSYHVREESTYLPLTSMQPTQAMGEEPSRAE).

This sequence belongs to the immunoglobulin superfamily. ICAM family. As to quaternary structure, interacts with moesin/MSN. Upon stimulation by a physiologic stimuli becomes rapidly and transiently phosphorylated on serine residues. As to expression, leukocytes.

The protein resides in the membrane. In terms of biological role, ICAM proteins are ligands for the leukocyte adhesion protein LFA-1 (integrin alpha-L/beta-2). ICAM3 is also a ligand for integrin alpha-D/beta-2. In association with integrin alpha-L/beta-2, contributes to apoptotic neutrophil phagocytosis by macrophages. The polypeptide is Intercellular adhesion molecule 3 (ICAM3) (Pan troglodytes (Chimpanzee)).